A 404-amino-acid polypeptide reads, in one-letter code: S-adenosylmethionine synthase (404 aa).

Polar residues predominate over residues 1–13 (MSQSRYFFTSESV). The segment at 1–20 (MSQSRYFFTSESVSEGHPDK) is disordered. H17 lines the ATP pocket. D19 contacts Mg(2+). E45 serves as a coordination point for K(+). L-methionine-binding residues include E58 and Q101. The interval 101 to 111 (QSPDINRGVDR) is flexible loop. Residues 172 to 174 (DAK), 245 to 246 (RF), D254, 260 to 261 (RK), A277, and K281 each bind ATP. D254 is a binding site for L-methionine. K285 contacts L-methionine.

It belongs to the AdoMet synthase family. Homotetramer; dimer of dimers. Mg(2+) is required as a cofactor. It depends on K(+) as a cofactor.

It is found in the cytoplasm. It carries out the reaction L-methionine + ATP + H2O = S-adenosyl-L-methionine + phosphate + diphosphate. It participates in amino-acid biosynthesis; S-adenosyl-L-methionine biosynthesis; S-adenosyl-L-methionine from L-methionine: step 1/1. In terms of biological role, catalyzes the formation of S-adenosylmethionine (AdoMet) from methionine and ATP. The overall synthetic reaction is composed of two sequential steps, AdoMet formation and the subsequent tripolyphosphate hydrolysis which occurs prior to release of AdoMet from the enzyme. The sequence is that of S-adenosylmethionine synthase from Chlorobium limicola (strain DSM 245 / NBRC 103803 / 6330).